The following is a 270-amino-acid chain: Cyclohexanol dehydrogenase (270 aa).

Residues Arg19, Asp40, Asp78, Val79, Asn105, Tyr176, Lys180, Ile209, and Thr211 each contribute to the NAD(+) site. Tyr176 acts as the Proton acceptor in catalysis.

The protein belongs to the short-chain dehydrogenases/reductases (SDR) family. As to quaternary structure, homodimer.

The protein localises to the cytoplasm. It carries out the reaction cyclohexanol + NAD(+) = cyclohexanone + NADH + H(+). Activity is enhanced by the addition of Ba(2+) and Mg(2+), but inhibited by the addition of Al(3+), Ca(2+), Co(2+), Cu(2+), Mn(2+) and Zn(2+). Functionally, catalyzes the oxidation of cyclohexanol to cyclohexanone. Can also use a broad range of other alcohols, including trans-cyclohexane-1,2-diol, trans-cyclopentane-1,2-diol, cyclopentanol, hexane-1,2-diol, ethanol, 1-propanol, 1-butanol, 1-pentanol and 1-hexanol. The chain is Cyclohexanol dehydrogenase from Rhodococcus sp. (strain TK6).